The chain runs to 350 residues: Biotin synthase (350 aa).

Positions 1–13 (MVTQAATRPSNDA) are enriched in polar residues. The interval 1–20 (MVTQAATRPSNDAGQDGVTE) is disordered. The 226-residue stretch at 71 to 296 (PEVEVEGIIS…RTMLRFAGGR (226 aa)) folds into the Radical SAM core domain. [4Fe-4S] cluster contacts are provided by Cys86, Cys90, and Cys93. 4 residues coordinate [2Fe-2S] cluster: Cys129, Cys162, Cys221, and Arg291.

The protein belongs to the radical SAM superfamily. Biotin synthase family. As to quaternary structure, homodimer. Requires [4Fe-4S] cluster as cofactor. The cofactor is [2Fe-2S] cluster.

The catalysed reaction is (4R,5S)-dethiobiotin + (sulfur carrier)-SH + 2 reduced [2Fe-2S]-[ferredoxin] + 2 S-adenosyl-L-methionine = (sulfur carrier)-H + biotin + 2 5'-deoxyadenosine + 2 L-methionine + 2 oxidized [2Fe-2S]-[ferredoxin]. Its pathway is cofactor biosynthesis; biotin biosynthesis; biotin from 7,8-diaminononanoate: step 2/2. Catalyzes the conversion of dethiobiotin (DTB) to biotin by the insertion of a sulfur atom into dethiobiotin via a radical-based mechanism. The polypeptide is Biotin synthase (Mycobacterium ulcerans (strain Agy99)).